Here is a 632-residue protein sequence, read N- to C-terminus: Palmitoyltransferase ZDHHC17 (632 aa).

Topologically, residues 1 to 304 (MQREEGFNTK…LKADKEFRQK (304 aa)) are cytoplasmic. Residues 11 to 305 (MADGPDEYET…KADKEFRQKV (295 aa)) are necessary and sufficient for interaction with DNAJC5 and SNAP25. ANK repeat units lie at residues 51 to 86 (THID…VRQP), 89 to 118 (ENVT…IVDQ), 123 to 152 (LNST…DPSL), 156 to 185 (EGCS…DVDM), 189 to 219 (NGMT…SVNL), 224 to 253 (HKNT…NVDA), and 257 to 286 (KGES…AKGY). 2 helical membrane-spanning segments follow: residues 305 to 325 (VMLG…DLDI) and 326 to 346 (DSWL…QFLS). The Cytoplasmic segment spans residues 347–357 (KSFFDHSMHSA). Residues 358 to 378 (LPLGIYLATKFWMYVTWFFWF) traverse the membrane as a helical segment. Over 379-381 (WND) the chain is Lumenal. The chain crosses the membrane as a helical span at residues 382-402 (LNFLFIHLPFLANSVALFYNF). The Cytoplasmic segment spans residues 403–480 (GKSWKSDPGI…GNCVGAGNHR (78 aa)). The DHHC domain occupies 437–487 (IFCSTCLIRKPVRSKHCGVCNRCIAKFDHHCPWVGNCVGAGNHRYFMGYLF). Catalysis depends on Cys-467, which acts as the S-palmitoyl cysteine intermediate. The helical transmembrane segment at 481-501 (YFMGYLFFLLFMICWMIYGCV) threads the bilayer. The Lumenal segment spans residues 502–529 (SYWGLHCETTYTKDGFWTYITQIATCSP). Residues 530–550 (WMFWMFLNSVFHFLWVAVLLM) traverse the membrane as a helical segment. The Cytoplasmic segment spans residues 551–632 (CQLYQITCLG…QISGSGYQLV (82 aa)).

Belongs to the DHHC palmitoyltransferase family. AKR/ZDHHC17 subfamily. Interacts (via ANK repeats) with numerous proteins (via the consensus sequence motif [VIAP]-[VIT]-x-x-Q-P). Interacts (via ANK repeats) with CLIP3. Interacts (via ANK repeats) with HTT. Interacts (via ANK repeats) with DNAJC5 (via C-terminus). Interacts (via ANK repeats) with MAP6. Interacts (via ANK repeats) with SNAP23. Interacts (via ANK repeats) with SNAP25. Interacts (via ANK repeats) with EVL. Interacts with SPRED1 and SPRED3. Interacts with GPM6A and OPTN. May interact (via ANK repeats) with SPRED2. May interact with NTRK1; may regulate its localization and function. Post-translationally, autopalmitoylated. Autopalmitoylation has a regulatory role in ZDHHC17-mediated Mg(2+) transport. Expressed in liver, testis, kidney, heart, pancreas and brain. Highest expression was seen in the brain. Localized predominantly in the perinuclear regions of neurons from the cortex, striatum and hippocampus. Colocalized with HTT in the medium spiny neurons of the striatum and the spiny neurons that project into the globus pallidus.

The protein localises to the golgi apparatus membrane. The protein resides in the cytoplasmic vesicle membrane. It is found in the presynaptic cell membrane. The catalysed reaction is L-cysteinyl-[protein] + hexadecanoyl-CoA = S-hexadecanoyl-L-cysteinyl-[protein] + CoA. It catalyses the reaction L-cysteinyl-[protein] + tetradecanoyl-CoA = S-tetradecanoyl-L-cysteinyl-[protein] + CoA. It carries out the reaction L-cysteinyl-[protein] + octadecanoyl-CoA = S-octadecanoyl-L-cysteinyl-[protein] + CoA. Functionally, palmitoyltransferase that catalyzes the addition of palmitate onto various protein substrates and is involved in a variety of cellular processes. Has no stringent fatty acid selectivity and in addition to palmitate can also transfer onto target proteins myristate from tetradecanoyl-CoA and stearate from octadecanoyl-CoA. Palmitoyltransferase specific for a subset of neuronal proteins, including SNAP25, DLG4/PSD95, GAD2, SYT1 and HTT. Also palmitoylates neuronal protein GPM6A as well as SPRED1 and SPRED3. Could also play a role in axonogenesis through the regulation of NTRK1 and the downstream ERK1/ERK2 signaling cascade. May be involved in the sorting or targeting of critical proteins involved in the initiating events of endocytosis at the plasma membrane. May play a role in Mg(2+) transport. Could also palmitoylate DNAJC5 and regulate its localization to the Golgi membrane. Palmitoylates CASP6, thereby preventing its dimerization and subsequent activation. In Mus musculus (Mouse), this protein is Palmitoyltransferase ZDHHC17.